Consider the following 1369-residue polypeptide: Serine/threonine-protein kinase SIK3 (1369 aa).

The disordered stretch occupies residues 26-55; that stretch reads LLPPPAAGPPAAPAAVPPAAVPARPTAPAS. Positions 27 to 45 are enriched in pro residues; sequence LPPPAAGPPAAPAAVPPAA. Residues 46–55 show a composition bias toward low complexity; sequence VPARPTAPAS. The Protein kinase domain occupies 66–317; that stretch reads YEIDRTIGKG…MEQICRHKWM (252 aa). Residue Thr-71 is modified to Phosphothreonine. Residues 72-80 and Lys-95 contribute to the ATP site; that span reads IGKGNFAVV. Asp-188 (proton acceptor) is an active-site residue. Position 221 is a phosphothreonine (Thr-221). In terms of domain architecture, UBA spans 344 to 384; sequence PLNDDVLLAMEDMGLDKERTLQSLRSDAYDHYSAIYSLLCD. A Phosphothreonine modification is found at Thr-469. Phosphoserine occurs at positions 551, 591, 592, 674, and 695. Residues 775-821 form a disordered region; it reads IQPSSPPPNHPSNHLFRQPSNSPPPVSSAMITSHGATSPSQFQGLPS. Residues 803–818 are compositionally biased toward polar residues; that stretch reads AMITSHGATSPSQFQG. Ser-914 is subject to Phosphoserine. Residues 942–993 form a disordered region; that stretch reads LFSDQSRGSPSSYSPSTGVGFPPTQALKVPPLDQFPTFPPSAQQQPPHYTTS. Low complexity predominate over residues 944-957; it reads SDQSRGSPSSYSPS. The span at 981–993 shows a compositional bias: polar residues; the sequence is PSAQQQPPHYTTS. A Phosphoserine modification is found at Ser-1026. Omega-N-methylarginine is present on Arg-1034. A disordered region spans residues 1314–1338; sequence DEEDEECGVSLGHEHPGLGDGSQHL.

It belongs to the protein kinase superfamily. CAMK Ser/Thr protein kinase family. SNF1 subfamily. In terms of assembly, binds to and is activated by YWHAZ when phosphorylated on Thr-221. Interacts with 14-3-3 proteins. Interacts with HDAC4; this interaction leads to HDAC4 retention in the cytoplasm. Interacts with DEPTOR, MLST8/GbetaL, RICTOR and RPTOR. Mg(2+) serves as cofactor. Post-translationally, phosphorylated at Thr-221 by STK11/LKB1 in complex with STE20-related adapter-alpha (STRADA) pseudo kinase and CAB39. In terms of tissue distribution, expressed in hypertrophic chondrocytes in the growth plate.

The protein localises to the cytoplasm. The catalysed reaction is L-seryl-[protein] + ATP = O-phospho-L-seryl-[protein] + ADP + H(+). It catalyses the reaction L-threonyl-[protein] + ATP = O-phospho-L-threonyl-[protein] + ADP + H(+). Its activity is regulated as follows. Activated by phosphorylation on Thr-221. In terms of biological role, positive regulator of mTOR signaling that functions by triggering the degradation of DEPTOR, an mTOR inhibitor. Required for chondrocyte hypertrophy during skeletogenesis. Negatively regulates cAMP signaling pathway possibly by acting on CRTC2/TORC2 and CRTC3/TORC3. Prevents HDAC4 translocation to the nucleus. The protein is Serine/threonine-protein kinase SIK3 (Sik3) of Mus musculus (Mouse).